An 88-amino-acid chain; its full sequence is Small ribosomal subunit protein bS20 (88 aa).

Residues 1-20 (MANTKSARKSLIKSKQQRKC) are disordered.

The protein belongs to the bacterial ribosomal protein bS20 family.

Its function is as follows. Binds directly to 16S ribosomal RNA. This Blochmanniella pennsylvanica (strain BPEN) protein is Small ribosomal subunit protein bS20.